A 210-amino-acid chain; its full sequence is Small ribosomal subunit protein uS4 (210 aa).

The disordered stretch occupies residues E30 to G49. Residues R99 to I162 form the S4 RNA-binding domain.

Belongs to the universal ribosomal protein uS4 family. In terms of assembly, part of the 30S ribosomal subunit. Contacts protein S5. The interaction surface between S4 and S5 is involved in control of translational fidelity.

Its function is as follows. One of the primary rRNA binding proteins, it binds directly to 16S rRNA where it nucleates assembly of the body of the 30S subunit. With S5 and S12 plays an important role in translational accuracy. The polypeptide is Small ribosomal subunit protein uS4 (Leptospira biflexa serovar Patoc (strain Patoc 1 / Ames)).